The chain runs to 971 residues: Unconventional myosin-XIX (971 aa).

The tract at residues 1–25 (MSRPLSKNTEREPKQINGHQNNLSN) is disordered. Residues 48-755 (HLYDDLTKVN…MVELLEERRL (708 aa)) form the Myosin motor domain. 145–152 (GESGAGKT) provides a ligand contact to ATP. The actin-binding stretch occupies residues 611 to 633 (LESLMQILHSTTPHYIRCIKPNV). IQ domains lie at 758 to 787 (ISSK…ATTI) and 780 to 809 (QSKA…AATV). The interval 826-971 (AAELDDSTED…FNEILLEKTV (146 aa)) is myMOMA region.

Belongs to the TRAFAC class myosin-kinesin ATPase superfamily. Myosin family. Myosin is a hexamer of 2 heavy chains and 4 light chains.

It is found in the mitochondrion outer membrane. Its subcellular location is the cytoplasm. The protein resides in the cytoskeleton. Actin-based motor molecule with ATPase activity that localizes to the mitochondrion outer membrane. Motor protein that moves towards the plus-end of actin filaments. Required for mitochondrial inheritance during mitosis. May be involved in mitochondrial transport or positioning. The protein is Unconventional myosin-XIX of Xenopus laevis (African clawed frog).